Consider the following 329-residue polypeptide: Protein-arginine N-acetylglucosaminyltransferase NleB (329 aa).

An N-beta-linked (GlcNAc) arginine; by autocatalysis glycan is attached at R13. UDP-N-acetyl-alpha-D-glucosamine is bound at residue 48 to 50 (QWF). A glycan (N-beta-linked (GlcNAc) arginine; by autocatalysis) is linked at R53. UDP-N-acetyl-alpha-D-glucosamine is bound at residue Y72. The N-beta-linked (GlcNAc) arginine; by autocatalysis glycan is linked to R159. 219-222 (YLDA) is a UDP-N-acetyl-alpha-D-glucosamine binding site. The short motif at 221–223 (DAD) is the DXD motif element. D223 is a binding site for Mn(2+). The active-site Proton acceptor is E253. The N-beta-linked (GlcNAc) arginine; by autocatalysis glycan is linked to R293. Mn(2+)-binding residues include N320 and S322. Residues S322 and 327–329 (SSW) contribute to the UDP-N-acetyl-alpha-D-glucosamine site.

It belongs to the glycosyltransferase NleB family. Mn(2+) serves as cofactor. Auto-glycosylated: arginine GlcNAcylation is required for activity toward death domain-containing host target proteins.

The protein resides in the secreted. It localises to the host cell. The enzyme catalyses L-arginyl-[protein] + UDP-N-acetyl-alpha-D-glucosamine = N(omega)-(N-acetyl-beta-D-glucosaminyl)-L-arginyl-[protein] + UDP + H(+). Functionally, protein-arginine N-acetylglucosaminyltransferase effector that disrupts TNF signaling in infected cells, including NF-kappa-B signaling, apoptosis and necroptosis. Acts by catalyzing the transfer of a single N-acetylglucosamine (GlcNAc) to a conserved arginine residue in the death domain of host proteins FADD, TNFRSF1A and RIPK1: arginine GlcNAcylation prevents homotypic/heterotypic death domain interactions and assembly of the oligomeric TNF-alpha receptor complex, thereby disrupting TNF signaling. Has preference for host FADD as substrate compared to TNFRSF1A and RIPK1. Also acts on host proteins without a death domain: catalyzes GlcNAcylation of host GAPDH protein, thereby preventing GAPDH interaction with TRAF2 and TRAF3, leading to inhibit NF-kappa-B signaling and type I interferon production, respectively. Also displays intra-bacterial activity by mediating GlcNAcylation of glutathione synthetase GshB. Catalyzes auto-GlcNAcylation, which is required for activity toward death domain-containing host target proteins. This is Protein-arginine N-acetylglucosaminyltransferase NleB from Citrobacter rodentium.